The following is a 219-amino-acid chain: C-type lectin domain family 4 member E (219 aa).

The Cytoplasmic segment spans residues 1–19 (MNSSKSSETQCTERGCFSS). Residues 20–40 (QMFLWTVAGIPILFLSACFIT) form a helical; Signal-anchor for type II membrane protein membrane-spanning segment. The Extracellular segment spans residues 41–219 (RCVVTFRIFQ…INPLNKGKSL (179 aa)). N-linked (GlcNAc...) asparagine glycosylation is present at asparagine 62. Cysteine 80 and cysteine 91 are oxidised to a cystine. The C-type lectin domain occupies 87 to 206 (FQSSCYFFST…CFLNYFRICE (120 aa)). Asparagine 107 is a glycosylation site (N-linked (GlcNAc...) asparagine). Cystine bridges form between cysteine 108/cysteine 205 and cysteine 179/cysteine 197. Ca(2+) is bound by residues valine 117, asparagine 119, glutamate 123, glutamate 169, asparagine 171, asparagine 193, aspartate 194, and glutamate 206. The Confers specificity for glucose/mannose-type carbohydrates motif lies at 169 to 171 (EPN).

Monomer and homodimer. Interacts with signaling adapter Fc receptor gamma chain/FCER1G to form a functional complex; the interaction is direct. Alternatively, acts as a bridge for interaction between CLEC4D and FCER1G. A heterodimer of CLEC4E and CLEC4D associates with FCER1G to form a functional complex. Interacts with SAP130 nuclear protein that is released from necrotic cells; the interaction is direct. In terms of tissue distribution, expressed in monocytes and macrophages.

The protein resides in the cell membrane. It localises to the cell projection. It is found in the phagocytic cup. In terms of biological role, calcium-dependent lectin that acts as a pattern recognition receptor (PRR) of the innate immune system: recognizes damage-associated molecular patterns (DAMPs) of abnormal self and pathogen-associated molecular patterns (PAMPs) of bacteria and fungi. The PAMPs notably include mycobacterial trehalose 6,6'-dimycolate (TDM), a cell wall glycolipid with potent adjuvant immunomodulatory functions. Interacts with signaling adapter Fc receptor gamma chain/FCER1G to form a functional complex in myeloid cells. Binding of mycobacterial trehalose 6,6'-dimycolate (TDM) to this receptor complex leads to phosphorylation of the immunoreceptor tyrosine-based activation motif (ITAM) of FCER1G, triggering activation of SYK, CARD9 and NF-kappa-B, consequently driving maturation of antigen-presenting cells and shaping antigen-specific priming of T-cells toward effector T-helper 1 and T-helper 17 cell subtypes. Also recognizes alpha-mannose residues on pathogenic fungi of the genus Malassezia and mediates macrophage activation. Through recognition of DAMPs released upon nonhomeostatic cell death, enables immune sensing of damaged self and promotes inflammatory cell infiltration into the damaged tissue. This Homo sapiens (Human) protein is C-type lectin domain family 4 member E.